The following is a 79-amino-acid chain: Dolichyl-diphosphooligosaccharide--protein glycosyltransferase subunit TMEM258 (79 aa).

Residue methionine 1 is modified to N-acetylmethionine. The next 2 membrane-spanning stretches (helical) occupy residues valine 17–phenylalanine 37 and valine 59–isoleucine 79.

This sequence belongs to the OST5 family. In terms of assembly, component of the oligosaccharyltransferase (OST) complex. OST exists in two different complex forms which contain common core subunits RPN1, RPN2, OST48, OST4, DAD1 and TMEM258, either STT3A or STT3B as catalytic subunits, and form-specific accessory subunits. STT3A complex assembly occurs through the formation of 3 subcomplexes. Subcomplex 1 contains RPN1 and TMEM258, subcomplex 2 contains the STT3A-specific subunits STT3A, DC2/OSTC, and KCP2 as well as the core subunit OST4, and subcomplex 3 contains RPN2, DAD1, and OST48. The STT3A complex can form stable complexes with the Sec61 complex or with both the Sec61 and TRAP complexes.

Its subcellular location is the membrane. The protein localises to the endoplasmic reticulum. It is found in the cytoplasm. It functions in the pathway protein modification; protein glycosylation. Functionally, subunit of the oligosaccharyl transferase (OST) complex that catalyzes the initial transfer of a defined glycan (Glc(3)Man(9)GlcNAc(2) in eukaryotes) from the lipid carrier dolichol-pyrophosphate to an asparagine residue within an Asn-X-Ser/Thr consensus motif in nascent polypeptide chains, the first step in protein N-glycosylation. N-glycosylation occurs cotranslationally and the complex associates with the Sec61 complex at the channel-forming translocon complex that mediates protein translocation across the endoplasmic reticulum (ER). All subunits are required for a maximal enzyme activity. Involved in ER homeostasis in the colonic epithelium. This chain is Dolichyl-diphosphooligosaccharide--protein glycosyltransferase subunit TMEM258, found in Bos taurus (Bovine).